The following is a 183-amino-acid chain: Large ribosomal subunit protein uL5 (183 aa).

This sequence belongs to the universal ribosomal protein uL5 family. In terms of assembly, part of the 50S ribosomal subunit; part of the 5S rRNA/L5/L18/L25 subcomplex. Contacts the 5S rRNA and the P site tRNA. Forms a bridge to the 30S subunit in the 70S ribosome.

This is one of the proteins that bind and probably mediate the attachment of the 5S RNA into the large ribosomal subunit, where it forms part of the central protuberance. In the 70S ribosome it contacts protein S13 of the 30S subunit (bridge B1b), connecting the 2 subunits; this bridge is implicated in subunit movement. Contacts the P site tRNA; the 5S rRNA and some of its associated proteins might help stabilize positioning of ribosome-bound tRNAs. This chain is Large ribosomal subunit protein uL5, found in Pseudothermotoga lettingae (strain ATCC BAA-301 / DSM 14385 / NBRC 107922 / TMO) (Thermotoga lettingae).